The sequence spans 528 residues: Na(+)/H(+) antiporter NhaB (528 aa).

The next 11 helical transmembrane spans lie at 10 to 30 (IGNFLGNSPKWYKIAILSFLI), 63 to 83 (YPLQPGGLLAIEAVAIGMTSA), 96 to 116 (VLLLLVFMVAGIYFMKQLLLF), 131 to 165 (VSLMFCLTSAFLSAFLDALTVIAVIIAVAVGFYAI), 204 to 224 (LLMHAGVGTALGGVCTMVGEP), 240 to 260 (FVIRMSPVTVPVLIAGILTCL), 305 to 325 (VLVGVWLIAGLALHLASVGLV), 359 to 379 (LAVFFAVVAVIIDQHLFAPVI), 391 to 411 (LVIFYIANGLLSMVSDNVFVG), 449 to 469 (ATPNGQAAFLFLLTSALAPLI), and 476 to 496 (MVWMALPYTIVLSVVGVLAIE).

The protein belongs to the NhaB Na(+)/H(+) (TC 2.A.34) antiporter family.

The protein localises to the cell inner membrane. It carries out the reaction 2 Na(+)(in) + 3 H(+)(out) = 2 Na(+)(out) + 3 H(+)(in). In terms of biological role, na(+)/H(+) antiporter that extrudes sodium in exchange for external protons. The protein is Na(+)/H(+) antiporter NhaB of Shewanella putrefaciens (strain CN-32 / ATCC BAA-453).